A 183-amino-acid chain; its full sequence is Ribosome-recycling factor (183 aa).

Residues 134–156 (DANDELKKHQSEMSQDEVKGHQD) are disordered.

The protein belongs to the RRF family.

Its subcellular location is the cytoplasm. Responsible for the release of ribosomes from messenger RNA at the termination of protein biosynthesis. May increase the efficiency of translation by recycling ribosomes from one round of translation to another. This is Ribosome-recycling factor from Leptospira biflexa serovar Patoc (strain Patoc 1 / Ames).